The chain runs to 33 residues: Nigrocin-1 (33 aa).

Cysteines 27 and 33 form a disulfide.

It belongs to the frog skin active peptide (FSAP) family. Brevinin subfamily. As to expression, expressed by the skin dorsal glands.

The protein resides in the secreted. Its function is as follows. Shows antibacterial activity against both Gram-positive and Gram-negative bacteria and against the fungus C.albicans. Has no hemolytic activity. This chain is Nigrocin-1, found in Pelophylax nigromaculatus (Black-spotted frog).